The sequence spans 99 residues: Malonate decarboxylase acyl carrier protein (99 aa).

S25 bears the O-(phosphoribosyl dephospho-coenzyme A)serine mark.

Belongs to the MdcC family. Post-translationally, covalently binds the prosthetic group of malonate decarboxylase.

Its subcellular location is the cytoplasm. In terms of biological role, subunit of malonate decarboxylase, it is an acyl carrier protein to which acetyl and malonyl thioester residues are bound via a 2'-(5''-phosphoribosyl)-3'-dephospho-CoA prosthetic group and turn over during the catalytic mechanism. The polypeptide is Malonate decarboxylase acyl carrier protein (Pseudomonas paraeruginosa (strain DSM 24068 / PA7) (Pseudomonas aeruginosa (strain PA7))).